The chain runs to 332 residues: Phosphate acyltransferase (332 aa).

Belongs to the PlsX family. As to quaternary structure, homodimer. Probably interacts with PlsY.

It localises to the cytoplasm. It carries out the reaction a fatty acyl-[ACP] + phosphate = an acyl phosphate + holo-[ACP]. Its pathway is lipid metabolism; phospholipid metabolism. Functionally, catalyzes the reversible formation of acyl-phosphate (acyl-PO(4)) from acyl-[acyl-carrier-protein] (acyl-ACP). This enzyme utilizes acyl-ACP as fatty acyl donor, but not acyl-CoA. This chain is Phosphate acyltransferase, found in Bacillus pumilus (strain SAFR-032).